The chain runs to 120 residues: NAD(P)H-quinone oxidoreductase subunit 3, chloroplastic (120 aa).

A run of 3 helical transmembrane segments spans residues Ile9–Gly29, Met64–Met84, and Val88–Ser108.

This sequence belongs to the complex I subunit 3 family. As to quaternary structure, NDH is composed of at least 16 different subunits, 5 of which are encoded in the nucleus.

The protein resides in the plastid. It localises to the chloroplast thylakoid membrane. The enzyme catalyses a plastoquinone + NADH + (n+1) H(+)(in) = a plastoquinol + NAD(+) + n H(+)(out). The catalysed reaction is a plastoquinone + NADPH + (n+1) H(+)(in) = a plastoquinol + NADP(+) + n H(+)(out). NDH shuttles electrons from NAD(P)H:plastoquinone, via FMN and iron-sulfur (Fe-S) centers, to quinones in the photosynthetic chain and possibly in a chloroplast respiratory chain. The immediate electron acceptor for the enzyme in this species is believed to be plastoquinone. Couples the redox reaction to proton translocation, and thus conserves the redox energy in a proton gradient. This chain is NAD(P)H-quinone oxidoreductase subunit 3, chloroplastic, found in Buxus microphylla (Littleleaf boxwood).